A 537-amino-acid chain; its full sequence is O-phosphoserine--tRNA(Cys) ligase (537 aa).

Substrate-binding positions include 186-188, 231-233, 273-274, and Asn317; these read HMT, SAS, and YY.

It belongs to the class-II aminoacyl-tRNA synthetase family. O-phosphoseryl-tRNA(Cys) synthetase subfamily. Homotetramer. Interacts with SepCysS.

It carries out the reaction tRNA(Cys) + O-phospho-L-serine + ATP = O-phospho-L-seryl-tRNA(Cys) + AMP + diphosphate. Its function is as follows. Catalyzes the attachment of O-phosphoserine (Sep) to tRNA(Cys). In Methanococcus maripaludis (strain DSM 14266 / JCM 13030 / NBRC 101832 / S2 / LL), this protein is O-phosphoserine--tRNA(Cys) ligase.